The primary structure comprises 92 residues: Cell division topological specificity factor (92 aa).

Belongs to the MinE family.

Prevents the cell division inhibition by proteins MinC and MinD at internal division sites while permitting inhibition at polar sites. This ensures cell division at the proper site by restricting the formation of a division septum at the midpoint of the long axis of the cell. The sequence is that of Cell division topological specificity factor from Gluconobacter oxydans (strain 621H) (Gluconobacter suboxydans).